A 144-amino-acid chain; its full sequence is UPF0102 protein BPSL3274 (144 aa).

The disordered stretch occupies residues 1-28 (MCHAREASPGTGEPEAAPRDNFPREAGS). Residues 16–28 (AAPRDNFPREAGS) show a composition bias toward basic and acidic residues.

The protein belongs to the UPF0102 family.

In Burkholderia pseudomallei (strain K96243), this protein is UPF0102 protein BPSL3274.